The sequence spans 156 residues: MIQSQINRNIRLDLADAILLSKAKKDLSFAEIADGTGLAEAFVTAALLGQQALPADAARQVGAKLDLDEDAILLLQMIPLRGCIDDRIPTDPTMYRFYEMLQVYGTTLKALVHEKFGDGIISAINFKLDVKKVADPEGGERAVITLDGKYLPTKPF.

Residues R96, E99, and S122 contribute to the active site.

It belongs to the cyanase family. As to quaternary structure, homodecamer composed of five homodimers.

The enzyme catalyses cyanate + hydrogencarbonate + 3 H(+) = NH4(+) + 2 CO2. Its function is as follows. Catalyzes the reaction of cyanate with bicarbonate to produce ammonia and carbon dioxide. This chain is Cyanate hydratase (cynS), found in Escherichia coli O157:H7.